A 110-amino-acid polypeptide reads, in one-letter code: Large ribosomal subunit protein uL22 (110 aa).

It belongs to the universal ribosomal protein uL22 family. In terms of assembly, part of the 50S ribosomal subunit.

Its function is as follows. This protein binds specifically to 23S rRNA; its binding is stimulated by other ribosomal proteins, e.g. L4, L17, and L20. It is important during the early stages of 50S assembly. It makes multiple contacts with different domains of the 23S rRNA in the assembled 50S subunit and ribosome. In terms of biological role, the globular domain of the protein is located near the polypeptide exit tunnel on the outside of the subunit, while an extended beta-hairpin is found that lines the wall of the exit tunnel in the center of the 70S ribosome. This chain is Large ribosomal subunit protein uL22, found in Salmonella arizonae (strain ATCC BAA-731 / CDC346-86 / RSK2980).